We begin with the raw amino-acid sequence, 443 residues long: Probable D-serine dehydratase (443 aa).

N6-(pyridoxal phosphate)lysine is present on Lys118.

This sequence belongs to the serine/threonine dehydratase family. DsdA subfamily. Requires pyridoxal 5'-phosphate as cofactor.

The catalysed reaction is D-serine = pyruvate + NH4(+). This is Probable D-serine dehydratase from Aeromonas salmonicida (strain A449).